The sequence spans 93 residues: Bombyxin B-11 (93 aa).

Residues 1–22 (MMKTAVMFILVVVISLTYSSEE) form the signal peptide. Disulfide bonds link cysteine 30–cysteine 75, cysteine 42–cysteine 92, and cysteine 74–cysteine 79. A propeptide spans 49–64 (GGAQYAPYWQETYLRS) (bombyxin B-11 C peptide).

It belongs to the insulin family. Heterodimer of a B chain and an A chain linked by two disulfide bonds.

The protein resides in the secreted. Functionally, brain peptide responsible for activation of prothoracic glands to produce ecdysone in insects. The sequence is that of Bombyxin B-11 (BBXB11) from Bombyx mori (Silk moth).